A 524-amino-acid chain; its full sequence is Ribosomal protein uS12 methylthiotransferase RimO (524 aa).

Residues 20–31 (NSQTASDSTQPA) are compositionally biased toward polar residues. A disordered region spans residues 20–59 (NSQTASDSTQPAASAYHHKANHNQNRSIEQSAQQAAEQSL). The span at 48-58 (EQSAQQAAEQS) shows a compositional bias: low complexity. An MTTase N-terminal domain is found at 67 to 177 (PKVGFVSLGC…VITAVSTHAP (111 aa)). Residues cysteine 76, cysteine 112, cysteine 141, cysteine 216, cysteine 220, and cysteine 223 each contribute to the [4Fe-4S] cluster site. A Radical SAM core domain is found at 202 to 443 (LTPSHYAYLK…MAVQQQISEQ (242 aa)). The region spanning 446–519 (QEKVGKTMTV…EYDLFASYDA (74 aa)) is the TRAM domain.

It belongs to the methylthiotransferase family. RimO subfamily. Requires [4Fe-4S] cluster as cofactor.

The protein resides in the cytoplasm. It catalyses the reaction L-aspartate(89)-[ribosomal protein uS12]-hydrogen + (sulfur carrier)-SH + AH2 + 2 S-adenosyl-L-methionine = 3-methylsulfanyl-L-aspartate(89)-[ribosomal protein uS12]-hydrogen + (sulfur carrier)-H + 5'-deoxyadenosine + L-methionine + A + S-adenosyl-L-homocysteine + 2 H(+). Catalyzes the methylthiolation of an aspartic acid residue of ribosomal protein uS12. This is Ribosomal protein uS12 methylthiotransferase RimO from Psychrobacter sp. (strain PRwf-1).